The chain runs to 141 residues: HTH-type transcriptional repressor NsrR (141 aa).

The 128-residue stretch at 2-129 folds into the HTH rrf2-type domain; the sequence is QLTSFTDYGL…DSHTLADMVE (128 aa). Residues 28–51 constitute a DNA-binding region (H-T-H motif); that stretch reads ISEVTEVYGVSRNHMVKIINQLSR. 3 residues coordinate [2Fe-2S] cluster: C91, C96, and C102.

The cofactor is [2Fe-2S] cluster.

In terms of biological role, nitric oxide-sensitive repressor of genes involved in protecting the cell against nitrosative stress. May require iron for activity. In Serratia proteamaculans (strain 568), this protein is HTH-type transcriptional repressor NsrR.